A 191-amino-acid polypeptide reads, in one-letter code: Peptidyl-tRNA hydrolase (191 aa).

Tyr-15 contributes to the tRNA binding site. His-20 (proton acceptor) is an active-site residue. The tRNA site is built by Phe-66, Asn-68, and Asn-114.

It belongs to the PTH family. In terms of assembly, monomer.

The protein localises to the cytoplasm. The enzyme catalyses an N-acyl-L-alpha-aminoacyl-tRNA + H2O = an N-acyl-L-amino acid + a tRNA + H(+). In terms of biological role, hydrolyzes ribosome-free peptidyl-tRNAs (with 1 or more amino acids incorporated), which drop off the ribosome during protein synthesis, or as a result of ribosome stalling. Catalyzes the release of premature peptidyl moieties from peptidyl-tRNA molecules trapped in stalled 50S ribosomal subunits, and thus maintains levels of free tRNAs and 50S ribosomes. This Streptococcus agalactiae serotype III (strain NEM316) protein is Peptidyl-tRNA hydrolase.